Reading from the N-terminus, the 107-residue chain is uncharacterized protein (107 aa).

The chain crosses the membrane as a helical span at residues 12 to 32; it reads IILNIFLALLLVYFIFHCIYG.

The protein localises to the membrane. This is an uncharacterized protein from Rickettsia prowazekii (strain Madrid E).